Consider the following 1264-residue polypeptide: ATP-dependent helicase/nuclease subunit A (1264 aa).

The 471-residue stretch at 12 to 482 (EQFTDSQWQA…IILAENFRSR (471 aa)) folds into the UvrD-like helicase ATP-binding domain. ATP is bound at residue 33 to 40 (ASAGSGKT). The UvrD-like helicase C-terminal domain maps to 520–808 (SEAADYSTEL…RVMTIHASKG (289 aa)).

This sequence belongs to the helicase family. AddA subfamily. In terms of assembly, heterodimer of AddA and AddB/RexB. Mg(2+) serves as cofactor.

The enzyme catalyses Couples ATP hydrolysis with the unwinding of duplex DNA by translocating in the 3'-5' direction.. It carries out the reaction ATP + H2O = ADP + phosphate + H(+). In terms of biological role, the heterodimer acts as both an ATP-dependent DNA helicase and an ATP-dependent, dual-direction single-stranded exonuclease. Recognizes the chi site generating a DNA molecule suitable for the initiation of homologous recombination. The AddA nuclease domain is required for chi fragment generation; this subunit has the helicase and 3' -&gt; 5' nuclease activities. The protein is ATP-dependent helicase/nuclease subunit A of Enterococcus faecalis (strain ATCC 700802 / V583).